The following is a 55-amino-acid chain: ATP synthase protein 8 (55 aa).

A helical transmembrane segment spans residues 7-28; that stretch reads ISWFFNFLLAWFFLFIVVTILL.

This sequence belongs to the ATPase protein 8 family. As to quaternary structure, F-type ATPases have 2 components, CF(1) - the catalytic core - and CF(0) - the membrane proton channel.

It localises to the mitochondrion membrane. In terms of biological role, mitochondrial membrane ATP synthase (F(1)F(0) ATP synthase or Complex V) produces ATP from ADP in the presence of a proton gradient across the membrane which is generated by electron transport complexes of the respiratory chain. F-type ATPases consist of two structural domains, F(1) - containing the extramembraneous catalytic core and F(0) - containing the membrane proton channel, linked together by a central stalk and a peripheral stalk. During catalysis, ATP synthesis in the catalytic domain of F(1) is coupled via a rotary mechanism of the central stalk subunits to proton translocation. Part of the complex F(0) domain. Minor subunit located with subunit a in the membrane. The polypeptide is ATP synthase protein 8 (MT-ATP8) (Pisaster ochraceus (Ochre sea star)).